Consider the following 403-residue polypeptide: Blue light- and temperature-regulated antirepressor BluF (403 aa).

The region spanning 2–93 (LTTLIYRSHI…ARRFGKAGME (92 aa)) is the BLUF domain. The segment at 98–144 (RLHERDDVLQAVFDKGTSKFQLTYDDRALQFFRTFVLATEQSTYFEI) is joining helix. An EAL domain is found at 155–403 (DGSDKELDSC…IPSIAWPEKK (249 aa)).

In terms of assembly, monomer, it undergoes transient dimerization following photoexcitation or upon temperature reduction, with a relaxation time of about 2 minutes. The dimer may be the inactive state. Interacts with the N- and C-terminal domains of BluR. Can also interact with the C-terminal domain of MlrA. It depends on FAD as a cofactor.

Functionally, binds to and releases the BluR repressor from its bound DNA target in a blue light-dependent (470 nm) fashion. A shift to low temperature also triggers a BluF-mediated relief of repression by BluR, suggesting BluF may serve as a thermometer. Blue light may act to increase the affinity of BluF for BluR, allowing it to be released from its operator. The protein has a reversible photocycle, and undergoes structural changes, probably in the EAL domain, in response to light. This chain is Blue light- and temperature-regulated antirepressor BluF, found in Escherichia coli (strain K12).